Reading from the N-terminus, the 212-residue chain is Eggshell protein 1 (212 aa).

A signal peptide spans Met-1–Ser-27. Residues Arg-155–Tyr-212 form a disordered region. Gly residues predominate over residues Gly-163–Gly-205.

As to expression, detected only in mature female parasites.

This Schistosoma japonicum (Blood fluke) protein is Eggshell protein 1 (ESG-1).